The sequence spans 275 residues: Large ribosomal subunit protein uL2c (275 aa).

A disordered region spans residues 28 to 53 (TPTKSLTHANHRARGRNHSGSITTRW).

It belongs to the universal ribosomal protein uL2 family. Part of the 50S ribosomal subunit.

The protein resides in the plastid. It localises to the chloroplast. The sequence is that of Large ribosomal subunit protein uL2c (rpl2) from Nephroselmis olivacea (Green alga).